An 868-amino-acid polypeptide reads, in one-letter code: Homeobox-leucine zipper protein HOX29 (868 aa).

Positions 9–72 form a DNA-binding region, homeobox; the sequence is DASKYVRYTP…NRRCREKQRK (64 aa). A coiled-coil region spans residues 64–106; sequence RRCREKQRKESSRLQALNRKLTAMNKLLMEENDRLQKQVSQLV. Positions 150 to 171 are disordered; sequence VTSGHHHQQQQHNVVQPPPRDA. One can recognise an START domain in the interval 169–397; it reads RDASPAGLMS…VAHEDTRSVI (229 aa).

Belongs to the HD-ZIP homeobox family. Class III subfamily. Expressed in phloem.

The protein localises to the nucleus. In terms of biological role, probable transcription factor that may be necessary for the proper patterning of vascular bundles. This Oryza sativa subsp. japonica (Rice) protein is Homeobox-leucine zipper protein HOX29 (HOX29).